We begin with the raw amino-acid sequence, 258 residues long: 5'-nucleotidase SurE (258 aa).

A divalent metal cation contacts are provided by aspartate 9, aspartate 10, serine 40, and asparagine 95.

This sequence belongs to the SurE nucleotidase family. It depends on a divalent metal cation as a cofactor.

The protein resides in the cytoplasm. The enzyme catalyses a ribonucleoside 5'-phosphate + H2O = a ribonucleoside + phosphate. Functionally, nucleotidase that shows phosphatase activity on nucleoside 5'-monophosphates. The protein is 5'-nucleotidase SurE of Nitratiruptor sp. (strain SB155-2).